A 491-amino-acid chain; its full sequence is Cytochrome P450 2C40 (491 aa).

Positions 1–25 (MDPFVVLVLCLSFLLVLSLWRQRSA) are cleaved as a signal peptide. Residue Cys-435 participates in heme binding.

Belongs to the cytochrome P450 family. Requires heme as cofactor. As to expression, liver, brain, kidney, and intestine, with trace amounts in lung and heart. Expressed throughout the intestinal tract, with higher expression levels in jejunum, cecum and colon.

It is found in the endoplasmic reticulum membrane. It localises to the microsome membrane. The catalysed reaction is (5Z,8Z,11Z,14Z)-eicosatetraenoate + reduced [NADPH--hemoprotein reductase] + O2 = 16(R)-hydroxy-(5Z,8Z,11Z,14Z)-eicosatetraenoate + oxidized [NADPH--hemoprotein reductase] + H2O + H(+). It carries out the reaction (5Z,8Z,11Z,14Z)-eicosatetraenoate + reduced [NADPH--hemoprotein reductase] + O2 = 16(S)-hydroxy-(5Z,8Z,11Z,14Z)-eicosatetraenoate + oxidized [NADPH--hemoprotein reductase] + H2O + H(+). The enzyme catalyses (5Z,8Z,11Z,14Z)-eicosatetraenoate + reduced [NADPH--hemoprotein reductase] + O2 = (14R,15S)-epoxy-(5Z,8Z,11Z)-eicosatrienoate + oxidized [NADPH--hemoprotein reductase] + H2O + H(+). It catalyses the reaction (5Z,8Z,11Z,14Z)-eicosatetraenoate + reduced [NADPH--hemoprotein reductase] + O2 = (14S,15R)-epoxy-(5Z,8Z,11Z)-eicosatrienoate + oxidized [NADPH--hemoprotein reductase] + H2O + H(+). Its pathway is lipid metabolism; arachidonate metabolism. Functionally, a cytochrome P450 monooxygenase that may play a major role in the metabolism of arachidonic acid in the intestinal tract. Exhibits regioselective hydroxylase and epoxidase activity toward arachidonic acid, producing 16(R)-hydroxyeicosatetraenoic acid (HETE) and (14R,15S)-epoxyeicosatrienoic acid (EpETrE) as major products. Mechanistically, uses molecular oxygen inserting one oxygen atom into a substrate, and reducing the second into a water molecule, with two electrons provided by NADPH via cytochrome P450 reductase (CPR; NADPH-ferrihemoprotein reductase). The polypeptide is Cytochrome P450 2C40 (Mus musculus (Mouse)).